We begin with the raw amino-acid sequence, 366 residues long: MAGPRVEVDGGIMEGGGQILRVSTALSCLLGLPLRVQKIRAGRSTPGLRPQHLSGLEMIRDLCDGQLEGAEIGSTEITFTPEKIKGGVHTADTKTAGSVCLLMQVSMPCVLFAACPSELRLKGGTNAEMAPQIDYTAMVFKPIVEKFGFTFNCDIKMRGYYPKGGGEVIVRMSPVKQLSPINLTDRGCVTKIYGRAFVAGVLPFKVAKDMAAAAVRCIRKEIRDLYVNIQPVQEPKDQAFGNGNGIIIIAETSTGCLFAGSSLGKRGVNADKVGIEAAEMLLANLRHGGAVDEYLQDQLIIFMALASGISRIKTGPVTLHTQTAIHFAEQLAKAKFTVKKSEDEEDASKDTYIIECQGIGMTNPNL.

ATP is bound by residues Gln-104, Pro-131, Tyr-294, Asp-297, Gln-298, and His-320. His-320 (tele-AMP-histidine intermediate) is an active-site residue.

This sequence belongs to the RNA 3'-terminal cyclase family. Type 1 subfamily.

It localises to the nucleus. The protein localises to the nucleoplasm. The enzyme catalyses a 3'-end 3'-phospho-ribonucleotide-RNA + ATP = a 3'-end 2',3'-cyclophospho-ribonucleotide-RNA + AMP + diphosphate. Functionally, catalyzes the conversion of 3'-phosphate to a 2',3'-cyclic phosphodiester at the end of RNA. The mechanism of action of the enzyme occurs in 3 steps: (A) adenylation of the enzyme by ATP; (B) transfer of adenylate to an RNA-N3'P to produce RNA-N3'PP5'A; (C) and attack of the adjacent 2'-hydroxyl on the 3'-phosphorus in the diester linkage to produce the cyclic end product. Likely functions in some aspects of cellular RNA processing. Function plays an important role in regulating axon regeneration by inhibiting central nervous system (CNS) axon regeneration following optic nerve injury. This is RNA 3'-terminal phosphate cyclase (RTCA) from Bos taurus (Bovine).